The following is a 170-amino-acid chain: Elicitin-like protein 1 (170 aa).

The N-terminal stretch at 1-19 (MFSKTLVVLAAVAAVTVNG) is a signal peptide. 3 disulfides stabilise this stretch: cysteine 25-cysteine 91, cysteine 47-cysteine 76, and cysteine 71-cysteine 118. The tract at residues 122 to 170 (GGGSTPTTAPPTSTTPTTAPPTGTTPTTAPPAGTTPGVTPSPTTPKPAC) is disordered. Positions 126–162 (TPTTAPPTSTTPTTAPPTGTTPTTAPPAGTTPGVTPS) are enriched in low complexity.

The protein belongs to the elicitin family.

Its subcellular location is the secreted. In terms of biological role, induces local and distal defense responses (incompatible hypersensitive reaction) in plants from the solanaceae and cruciferae families. Elicits leaf necrosis and causes the accumulation of pathogenesis-related proteins. Might interact with the lipidic molecules of the plasma membrane. The protein is Elicitin-like protein 1 (POD-1) of Pythium oligandrum (Mycoparasitic fungus).